The primary structure comprises 439 residues: Xylose isomerase (439 aa).

Active-site residues include His101 and Asp104. Glu232, Glu268, His271, Asp296, Asp307, Asp309, and Asp339 together coordinate Mg(2+).

It belongs to the xylose isomerase family. As to quaternary structure, homotetramer. Mg(2+) serves as cofactor.

Its subcellular location is the cytoplasm. The enzyme catalyses alpha-D-xylose = alpha-D-xylulofuranose. This chain is Xylose isomerase, found in Actinobacillus pleuropneumoniae serotype 5b (strain L20).